The primary structure comprises 909 residues: Villin-1 (909 aa).

Gelsolin-like repeat units follow at residues 29–79, 149–189, 262–305, 391–448, 529–569, and 631–672; these read KQLI…VDSI, VRVK…QEKA, GNLH…TERK, LKVW…QDRA, MQAI…SDHE, and LKVK…KSKE. Disordered stretches follow at residues 733–781 and 816–835; these read SLKG…CSSE and DGVARQESSSKSDISKQKPR. Over residues 752–762 the composition is skewed to basic and acidic residues; it reads QSKDNASRDLQ. Residue Ser-780 is modified to Phosphoserine. The HP domain occupies 844-909; sequence SLESLAYSYE…NKLKISLHLF (66 aa).

This sequence belongs to the villin/gelsolin family. Expressed in all tissues examined. Mainly detected in the vascular tissue and the pericycle of roots and in the vasculature of leaves. Not expressed in the root cap.

It localises to the cytoplasm. The protein localises to the cytoskeleton. Functionally, binds actin and actin filament bundles in a Ca(2+)/calmodulin-insensitive manner, but is unable to sever, cap, and nucleate actin filament formation in vitro. Does not protect individual filaments from severing by VLN3 (AC O81645). This chain is Villin-1, found in Arabidopsis thaliana (Mouse-ear cress).